We begin with the raw amino-acid sequence, 619 residues long: Dihydroxy-acid dehydratase (619 aa).

Aspartate 81 serves as a coordination point for Mg(2+). Residue cysteine 122 coordinates [2Fe-2S] cluster. The Mg(2+) site is built by aspartate 123 and lysine 124. The residue at position 124 (lysine 124) is an N6-carboxylysine. Residue cysteine 195 participates in [2Fe-2S] cluster binding. Position 494 (glutamate 494) interacts with Mg(2+). Serine 520 (proton acceptor) is an active-site residue.

This sequence belongs to the IlvD/Edd family. Homodimer. Requires [2Fe-2S] cluster as cofactor. The cofactor is Mg(2+).

The enzyme catalyses (2R)-2,3-dihydroxy-3-methylbutanoate = 3-methyl-2-oxobutanoate + H2O. It catalyses the reaction (2R,3R)-2,3-dihydroxy-3-methylpentanoate = (S)-3-methyl-2-oxopentanoate + H2O. Its pathway is amino-acid biosynthesis; L-isoleucine biosynthesis; L-isoleucine from 2-oxobutanoate: step 3/4. It participates in amino-acid biosynthesis; L-valine biosynthesis; L-valine from pyruvate: step 3/4. In terms of biological role, functions in the biosynthesis of branched-chain amino acids. Catalyzes the dehydration of (2R,3R)-2,3-dihydroxy-3-methylpentanoate (2,3-dihydroxy-3-methylvalerate) into 2-oxo-3-methylpentanoate (2-oxo-3-methylvalerate) and of (2R)-2,3-dihydroxy-3-methylbutanoate (2,3-dihydroxyisovalerate) into 2-oxo-3-methylbutanoate (2-oxoisovalerate), the penultimate precursor to L-isoleucine and L-valine, respectively. This chain is Dihydroxy-acid dehydratase, found in Shewanella sp. (strain MR-7).